Here is a 281-residue protein sequence, read N- to C-terminus: Nucleotide-binding protein Daro_0070 (281 aa).

8-15 (GLSGSGKS) is a binding site for ATP. 57–60 (DARS) contributes to the GTP binding site.

It belongs to the RapZ-like family.

In terms of biological role, displays ATPase and GTPase activities. The chain is Nucleotide-binding protein Daro_0070 from Dechloromonas aromatica (strain RCB).